Reading from the N-terminus, the 82-residue chain is Cytochrome b559 subunit alpha (82 aa).

Residues 22-36 (VIHAVTLPSIFLAGY) form a helical membrane-spanning segment. H24 provides a ligand contact to heme.

The protein belongs to the PsbE/PsbF family. As to quaternary structure, heterodimer of an alpha subunit and a beta subunit. PSII is composed of 1 copy each of membrane proteins PsbA, PsbB, PsbC, PsbD, PsbE, PsbF, PsbH, PsbI, PsbJ, PsbK, PsbL, PsbM, PsbT, PsbX, PsbY, Psb30/Ycf12, peripheral proteins PsbO, CyanoQ (PsbQ), PsbU, PsbV and a large number of cofactors. It forms dimeric complexes. The cofactor is heme b.

It localises to the cellular thylakoid membrane. In terms of biological role, this b-type cytochrome is tightly associated with the reaction center of photosystem II (PSII). PSII is a light-driven water:plastoquinone oxidoreductase that uses light energy to abstract electrons from H(2)O, generating O(2) and a proton gradient subsequently used for ATP formation. It consists of a core antenna complex that captures photons, and an electron transfer chain that converts photonic excitation into a charge separation. The sequence is that of Cytochrome b559 subunit alpha from Prochlorococcus marinus (strain MIT 9303).